Reading from the N-terminus, the 858-residue chain is Rho GTPase-activating protein 17 (858 aa).

Residues 14–246 (QTVGRAEKTE…MRAHQDKWAE (233 aa)) enclose the BAR domain. Positions 252–442 (TPLEEHLKRS…PIIQHADWFF (191 aa)) constitute a Rho-GAP domain. Polar residues predominate over residues 459-475 (TPNSNHSSHTGNDSDSG). The segment at 459–482 (TPNSNHSSHTGNDSDSGTLERKRP) is disordered. The residue at position 484 (Ser-484) is a Phosphoserine. Positions 516–823 (RKHISPAFQP…VTDTNSRVSE (308 aa)) are disordered. Positions 543–552 (PSQSSRADSN) are enriched in polar residues. Positions 553–563 (SVGGPVPSSSG) are enriched in low complexity. Ser-575 bears the Phosphoserine mark. Over residues 592–617 (RNSNQITTVPNQAQTGGNSHQLSVGT) the composition is skewed to polar residues. The span at 637–650 (APAPPKPGNPPPGH) shows a compositional bias: pro residues. Residues 653 to 702 (GQSSPGTGTSPKPSTRSPSPPQQQQQQQQQQQQQQQQQQQQQQQQQQQQQ) are compositionally biased toward low complexity. 2 positions are modified to phosphoserine: Ser-710 and Ser-712. Pro residues-rich tracts occupy residues 716–729 (IQAPNHPPPQPPTQ) and 738–756 (EPGPTPPQTPTPPSTPPPA). 3 positions are modified to phosphothreonine: Thr-742, Thr-746, and Thr-748. The SH3-binding motif lies at 742–755 (TPPQTPTPPSTPPP). Ser-751 carries the phosphoserine modification. Thr-752 is subject to Phosphothreonine. Residues 757 to 769 (KQNSSQSETTQLH) show a composition bias toward polar residues. Over residues 784–794 (RPSVPPPPNPP) the composition is skewed to pro residues. Positions 806–823 (SVPTASRIVTDTNSRVSE) are enriched in polar residues.

In terms of assembly, component of a complex whose core is composed of ARHGAP17, AMOT, PALS1, PATJ and PARD3/PAR3. Interacts with NHERF1, FNBP1, TRIP10, CAPZA (CAPZA1, CAPZA2 or CAPZA3), CAPZB, CD2AP and SH3KBP1/CIN85. In terms of tissue distribution, highly expressed in brain; neuron-specific (at protein level). Isoform 2, isoform 3 and isoform 4 are predominantly expressed in neuronal tissues and correlate well with the differentiation of neurons, while isoform 1 is strongly expressed in embryonic brain.

The protein resides in the membrane. It localises to the cytoplasm. It is found in the cell junction. The protein localises to the tight junction. Rho GTPase-activating protein involved in the maintenance of tight junction by regulating the activity of CDC42, thereby playing a central role in apical polarity of epithelial cells. Specifically acts as a GTPase activator for the CDC42 GTPase by converting it to an inactive GDP-bound state. The complex formed with AMOT acts by regulating the uptake of polarity proteins at tight junctions, possibly by deciding whether tight junction transmembrane proteins are recycled back to the plasma membrane or sent elsewhere. Participates in the Ca(2+)-dependent regulation of exocytosis, possibly by catalyzing GTPase activity of Rho family proteins and by inducing the reorganization of the cortical actin filaments. Acts as a GTPase activator in vitro for RAC1. The polypeptide is Rho GTPase-activating protein 17 (Arhgap17) (Rattus norvegicus (Rat)).